Here is a 559-residue protein sequence, read N- to C-terminus: Germacrene A synthase (559 aa).

Mg(2+)-binding residues include aspartate 312, aspartate 316, aspartate 456, threonine 460, and glutamate 464. A DDXXD motif motif is present at residues 312–316; sequence DDTYD.

The protein belongs to the terpene synthase family. Monomer. Mg(2+) serves as cofactor. Expressed in glandular trichomes of all aerial tissues, with highest levels in tissues accumulating parthenolide (e.g. flowers and, to some extent, leaves).

It carries out the reaction (2E,6E)-farnesyl diphosphate = (+)-(R)-germacrene A + diphosphate. The protein operates within secondary metabolite biosynthesis; terpenoid biosynthesis. Its function is as follows. Sesquiterpene synthase involved in germacrene A biosynthesis. Germacrene A is a precursor of several sesquiterpene lactones. The sequence is that of Germacrene A synthase from Tanacetum parthenium (Feverfew).